A 138-amino-acid polypeptide reads, in one-letter code: Putative pre-16S rRNA nuclease (138 aa).

The protein belongs to the YqgF nuclease family.

The protein resides in the cytoplasm. In terms of biological role, could be a nuclease involved in processing of the 5'-end of pre-16S rRNA. This Salmonella arizonae (strain ATCC BAA-731 / CDC346-86 / RSK2980) protein is Putative pre-16S rRNA nuclease.